We begin with the raw amino-acid sequence, 486 residues long: Putative ankyrin repeat protein R634 (486 aa).

ANK repeat units follow at residues 84-113 (DLFK…NVRE), 114-143 (HNDV…DLYA), 145-173 (KNTL…NFRE), 174-203 (NCDT…DVNS), 205-233 (SHKS…NIDW), 234-263 (RHNY…NLEI), 265-293 (DGCI…EIGF), 307-336 (NKIT…ATIK), 337-366 (EKNY…SLEK), 367-396 (KINK…NVKT), 398-426 (EGLP…DVTS), and 427-456 (YDNY…NVND).

This Acanthamoeba polyphaga (Amoeba) protein is Putative ankyrin repeat protein R634.